The following is a 322-amino-acid chain: MPGTLDHFRADEYSPYHFFSSEEWAKFRADTPLTLSADEVKRLRSLDDPIDLDEVRRIYLSLSRLLSSHVEASQLLFEQRNRFLNMGDVNKTPFVIGIAGSVAVGKSTTARILKELLARWPSSPKVDLITTDGFLYPNEVLRRENLMERKGFPESYDIGALLRFLSAIKAGQPNVKAPRYSHLTYDVLPNEFTVIDQPDILIFEGINVLQSRDLPAGGRIVPIVSDFFDFSIYIDADEDFIHNWYVNRFMNLRQTAFRDPNSFFNRYASISEEAALSIAEGLWQNINLKNLRQNIVPTRPRADLILRKGENHLIDTVALRKL.

100–107 (GSVAVGKS) contributes to the ATP binding site.

The protein belongs to the prokaryotic pantothenate kinase family.

Its subcellular location is the cytoplasm. It carries out the reaction (R)-pantothenate + ATP = (R)-4'-phosphopantothenate + ADP + H(+). It participates in cofactor biosynthesis; coenzyme A biosynthesis; CoA from (R)-pantothenate: step 1/5. The chain is Pantothenate kinase from Agrobacterium fabrum (strain C58 / ATCC 33970) (Agrobacterium tumefaciens (strain C58)).